The primary structure comprises 624 residues: Pheromone-processing carboxypeptidase kex1 (624 aa).

The first 18 residues, methionine 1–alanine 18, serve as a signal peptide directing secretion. Residues glutamine 19 to lysine 504 lie on the Lumenal side of the membrane. A glycan (N-linked (GlcNAc...) asparagine) is linked at asparagine 106. Residues serine 170 and aspartate 370 contribute to the active site. Residues asparagine 421 and asparagine 429 are each glycosylated (N-linked (GlcNAc...) asparagine). The active site involves histidine 432. Residues proline 461–glutamine 491 form a disordered region. The span at proline 472–serine 486 shows a compositional bias: polar residues. The N-linked (GlcNAc...) asparagine glycan is linked to asparagine 478. The chain crosses the membrane as a helical span at residues serine 505–tryptophan 525. At arginine 526 to histidine 624 the chain is on the cytoplasmic side. A disordered region spans residues arginine 533–histidine 624. Over residues phenylalanine 565 to serine 575 the composition is skewed to polar residues. Acidic residues predominate over residues glycine 606 to isoleucine 615.

Belongs to the peptidase S10 family.

It is found in the golgi apparatus. It localises to the trans-Golgi network membrane. The catalysed reaction is Preferential release of a C-terminal arginine or lysine residue.. Functionally, protease with a carboxypeptidase B-like function involved in the C-terminal processing of the lysine and arginine residues from protein precursors. Promotes cell fusion and is involved in the programmed cell death. The protein is Pheromone-processing carboxypeptidase kex1 (kex1) of Talaromyces stipitatus (strain ATCC 10500 / CBS 375.48 / QM 6759 / NRRL 1006) (Penicillium stipitatum).